The primary structure comprises 517 residues: MDLSSRLSSGSSRIPKRHRDYRDEEPRRERGSGGIGREDPRGHYGSERPRRRRRDESDFRRHRESRERSYREDERPRRERRYDDYEPRSLRYSSVGRSRSPPPSRERSVRSIEQELEQLRDVTPINQWKRKRSLWDIKPPGYELVTADQAKMSGVFPLPGAPRAAVTDPEKLLEFARSAEGSIIAPPPPLQPGASRQARRLVVTGIPNEFVEDAFVSFIEDLFISTTYHKPETKHFSSVNVCKEENFAILEVATPEDATFLWGLQSESYSNDVFLKFQRIQNYIVPQITPEVSQKRSDDYAKNDVLDSKDKIYISNLPLNLGEDQVVELLKPFGDLLSFQLIKNIADGSSKGFCFCEFKNPSDAEVAISGLDGKDTYGNKLHAQFACVGLNQAMIDKSNGMAILTELAKASSQSIPTRVLQLHNLITGDEIMDVQEYEDIYESVKTQFSNYGPLIDIKIPRSIGTRNSGLGTGKVFVRYSDIRSAEVAMEEMKGCKFNDRTIVIAFYGEDCYKANAW.

Low complexity predominate over residues 1 to 13 (MDLSSRLSSGSSR). The tract at residues 1–112 (MDLSSRLSSG…PSRERSVRSI (112 aa)) is disordered. Residues 20–89 (DYRDEEPRRE…RRYDDYEPRS (70 aa)) are compositionally biased toward basic and acidic residues. RRM domains are found at residues 310–388 (DKIY…FACV) and 418–509 (RVLQ…FYGE).

This sequence belongs to the splicing factor SR family. In terms of assembly, forms a heterodimer with the U2AF small subunit. Can also form a homodimer. U2AF large subunit (U2AF59), U2AF small subunit (U2AF23) and SF1 (bpb1) interact to form a complex required for complex A formation. Interacts with wat1/pop3.

Its subcellular location is the nucleus. Its function is as follows. Necessary for the splicing of pre-mRNA. The SF1-U2AF59-U2AF23 complex has a role in the recognition of the branch site (5'-UACUAAC-3'), the pyrimidine tract and the 3'-splice site at the 3'-end of introns. The chain is Splicing factor U2AF 59 kDa subunit (prp2) from Schizosaccharomyces pombe (strain 972 / ATCC 24843) (Fission yeast).